A 502-amino-acid polypeptide reads, in one-letter code: Glycerol kinase (502 aa).

ADP is bound at residue T14. T14, T15, and S16 together coordinate ATP. T14 provides a ligand contact to sn-glycerol 3-phosphate. ADP is bound at residue R18. The sn-glycerol 3-phosphate site is built by R84, E85, Y136, and D246. Residues R84, E85, Y136, D246, and Q247 each contribute to the glycerol site. ADP-binding residues include T268 and G311. Residues T268, G311, Q315, and G412 each contribute to the ATP site. ADP-binding residues include G412 and N416.

The protein belongs to the FGGY kinase family. In terms of assembly, homotetramer and homodimer (in equilibrium). Heterodimer with EIIA-Glc. Binds 1 zinc ion per glycerol kinase EIIA-Glc dimer. The zinc ion is important for dimerization.

It catalyses the reaction glycerol + ATP = sn-glycerol 3-phosphate + ADP + H(+). It functions in the pathway polyol metabolism; glycerol degradation via glycerol kinase pathway; sn-glycerol 3-phosphate from glycerol: step 1/1. Its activity is regulated as follows. Activity of this regulatory enzyme is affected by several metabolites. Allosterically and non-competitively inhibited by fructose 1,6-bisphosphate (FBP) and unphosphorylated phosphocarrier protein EIIA-Glc (III-Glc), an integral component of the bacterial phosphotransferase (PTS) system. Its function is as follows. Key enzyme in the regulation of glycerol uptake and metabolism. Catalyzes the phosphorylation of glycerol to yield sn-glycerol 3-phosphate. The sequence is that of Glycerol kinase from Escherichia coli O127:H6 (strain E2348/69 / EPEC).